Here is an 89-residue protein sequence, read N- to C-terminus: ATP synthase subunit c (89 aa).

2 helical membrane passes run 3–23 and 53–73; these read IILG…AIGA and FILA…ALMF.

Belongs to the ATPase C chain family. In terms of assembly, F-type ATPases have 2 components, F(1) - the catalytic core - and F(0) - the membrane proton channel. F(1) has five subunits: alpha(3), beta(3), gamma(1), delta(1), epsilon(1). F(0) has three main subunits: a(1), b(2) and c(10-14). The alpha and beta chains form an alternating ring which encloses part of the gamma chain. F(1) is attached to F(0) by a central stalk formed by the gamma and epsilon chains, while a peripheral stalk is formed by the delta and b chains.

The protein localises to the cell inner membrane. In terms of biological role, f(1)F(0) ATP synthase produces ATP from ADP in the presence of a proton or sodium gradient. F-type ATPases consist of two structural domains, F(1) containing the extramembraneous catalytic core and F(0) containing the membrane proton channel, linked together by a central stalk and a peripheral stalk. During catalysis, ATP synthesis in the catalytic domain of F(1) is coupled via a rotary mechanism of the central stalk subunits to proton translocation. Functionally, key component of the F(0) channel; it plays a direct role in translocation across the membrane. A homomeric c-ring of between 10-14 subunits forms the central stalk rotor element with the F(1) delta and epsilon subunits. This chain is ATP synthase subunit c, found in Verminephrobacter eiseniae (strain EF01-2).